A 374-amino-acid chain; its full sequence is Calcium/calmodulin-dependent protein kinase type 1 (374 aa).

In terms of domain architecture, Protein kinase spans 20–276 (YDFRDVLGTG…CEQALQHPWI (257 aa)). Residues 26–34 (LGTGAFSEV) and K49 each bind ATP. Residue K59 forms a Glycyl lysine isopeptide (Lys-Gly) (interchain with G-Cter in ubiquitin) linkage. D141 (proton acceptor) is an active-site residue. T177 is modified (phosphothreonine; by CaMKK1 and CaMKK2). An Involved in nuclear import motif is present at residues 263 to 264 (KR). The segment at 276–316 (IAGDTALDKNIHQSVSEQIKKNFAKSKWKQAFNATAVVRHM) is autoinhibitory domain. The tract at residues 296 to 317 (KNFAKSKWKQAFNATAVVRHMR) is calmodulin-binding. A Nuclear export signal motif is present at residues 315 to 321 (HMRKLQL).

This sequence belongs to the protein kinase superfamily. CAMK Ser/Thr protein kinase family. CaMK subfamily. Monomer. Interacts with XPO1. In terms of processing, phosphorylated by CaMKK1 and CaMKK2 on Thr-177. Post-translationally, polybiquitinated by the E3 ubiquitin-protein ligase complex SCF(FBXL12), leading to proteasomal degradation. Widely expressed.

Its subcellular location is the cytoplasm. It is found in the nucleus. It catalyses the reaction L-seryl-[protein] + ATP = O-phospho-L-seryl-[protein] + ADP + H(+). The enzyme catalyses L-threonyl-[protein] + ATP = O-phospho-L-threonyl-[protein] + ADP + H(+). With respect to regulation, activated by Ca(2+)/calmodulin. Binding of calmodulin results in conformational change that relieves intrasteric autoinhibition and allows phosphorylation of Thr-177 within the activation loop by CaMKK1 or CaMKK2. Phosphorylation of Thr-177 results in several fold increase in total activity. Unlike CaMK4, is unable to exhibit autonomous activity after Ca(2+)/calmodulin activation. In terms of biological role, calcium/calmodulin-dependent protein kinase that operates in the calcium-triggered CaMKK-CaMK1 signaling cascade and, upon calcium influx, regulates transcription activators activity, cell cycle, hormone production, cell differentiation, actin filament organization and neurite outgrowth. Recognizes the substrate consensus sequence [MVLIF]-x-R-x(2)-[ST]-x(3)-[MVLIF]. Regulates axonal extension and growth cone motility in hippocampal and cerebellar nerve cells. Upon NMDA receptor-mediated Ca(2+) elevation, promotes dendritic growth in hippocampal neurons and is essential in synapses for full long-term potentiation (LTP) and ERK2-dependent translational activation. Downstream of NMDA receptors, promotes the formation of spines and synapses in hippocampal neurons by phosphorylating ARHGEF7/BETAPIX on 'Ser-516', which results in the enhancement of ARHGEF7 activity and activation of RAC1. Promotes neuronal differentiation and neurite outgrowth by activation and phosphorylation of MARK2 on 'Ser-91', 'Ser-92', 'Ser-93' and 'Ser-294'. Promotes nuclear export of HDAC5 and binding to 14-3-3 by phosphorylation of 'Ser-259' and 'Ser-498' in the regulation of muscle cell differentiation. Regulates NUMB-mediated endocytosis by phosphorylation of NUMB on 'Ser-275' and 'Ser-294'. Involved in the regulation of basal and estrogen-stimulated migration of medulloblastoma cells through ARHGEF7/BETAPIX phosphorylation. Is required for proper activation of cyclin-D1/CDK4 complex during G1 progression in diploid fibroblasts. Plays a role in K(+) and ANG2-mediated regulation of the aldosterone synthase (CYP11B2) to produce aldosterone in the adrenal cortex. Phosphorylates EIF4G3/eIF4GII. In vitro phosphorylates CREB1, ATF1, CFTR, MYL9 and SYN1/synapsin I. The polypeptide is Calcium/calmodulin-dependent protein kinase type 1 (Camk1) (Rattus norvegicus (Rat)).